The chain runs to 312 residues: Methionyl-tRNA formyltransferase (312 aa).

Serine 109 to proline 112 lines the (6S)-5,6,7,8-tetrahydrofolate pocket.

It belongs to the Fmt family.

The enzyme catalyses L-methionyl-tRNA(fMet) + (6R)-10-formyltetrahydrofolate = N-formyl-L-methionyl-tRNA(fMet) + (6S)-5,6,7,8-tetrahydrofolate + H(+). In terms of biological role, attaches a formyl group to the free amino group of methionyl-tRNA(fMet). The formyl group appears to play a dual role in the initiator identity of N-formylmethionyl-tRNA by promoting its recognition by IF2 and preventing the misappropriation of this tRNA by the elongation apparatus. The chain is Methionyl-tRNA formyltransferase from Dictyoglomus thermophilum (strain ATCC 35947 / DSM 3960 / H-6-12).